A 264-amino-acid chain; its full sequence is Small ribosomal subunit protein uS3 (264 aa).

Positions 39–107 (VREYLKKKLK…PVHVNIEEIR (69 aa)) constitute a KH type-2 domain. Residues 217–264 (EEVAEEKRPRRNARPGDRRPRRDGEGAPAGARRGAPRRGGAGDGKTGE) form a disordered region. Residues 230–241 (RPGDRRPRRDGE) show a composition bias toward basic and acidic residues. Residues 253–264 (RRGGAGDGKTGE) show a composition bias toward gly residues.

It belongs to the universal ribosomal protein uS3 family. In terms of assembly, part of the 30S ribosomal subunit. Forms a tight complex with proteins S10 and S14.

Binds the lower part of the 30S subunit head. Binds mRNA in the 70S ribosome, positioning it for translation. The chain is Small ribosomal subunit protein uS3 from Paraburkholderia phymatum (strain DSM 17167 / CIP 108236 / LMG 21445 / STM815) (Burkholderia phymatum).